Reading from the N-terminus, the 336-residue chain is Cinnamoyl-CoA reductase 2 (336 aa).

Residues 21 to 27 (GAGGFIA), R46, K52, 72 to 73 (DL), 92 to 94 (TAS), Y165, K169, 192 to 195 (PVVV), and S207 each bind NADP(+). A disulfide bridge connects residues C158 and C166. K169 functions as the Proton donor in the catalytic mechanism.

Belongs to the NAD(P)-dependent epimerase/dehydratase family. Dihydroflavonol-4-reductase subfamily. The formation of a reversible disulfide bond reduces activity by perturbing the positioning of nearby catalytic residues. In terms of tissue distribution, mainly expressed in roots and stems, especially at the second internode and, to a lower extent, in leaves and flowers. Localized in vascular elements, with weaker expression in the interfascicular (xylem fiber) region.

It localises to the cytoplasm. It carries out the reaction (E)-coniferaldehyde + NADP(+) + CoA = (E)-feruloyl-CoA + NADPH + H(+). The enzyme catalyses (E)-4-coumaraldehyde + NADP(+) + CoA = (E)-4-coumaroyl-CoA + NADPH + H(+). It catalyses the reaction (E)-sinapaldehyde + NADP(+) + CoA = (E)-sinapoyl-CoA + NADPH + H(+). The catalysed reaction is (E)-cinnamaldehyde + NADP(+) + CoA = (E)-cinnamoyl-CoA + NADPH + H(+). It carries out the reaction (E)-caffeyl aldehyde + NADP(+) + CoA = (E)-caffeoyl-CoA + NADPH + H(+). Its pathway is aromatic compound metabolism; phenylpropanoid biosynthesis. Its function is as follows. Involved in the latter stages of lignin biosynthesis. Catalyzes one of the last steps of monolignol biosynthesis, the conversion of cinnamoyl-CoAs into their corresponding cinnamaldehydes. Mediates the conversion of caffeoyl-CoA and coumaroyl-CoA to caffaldehyde and coumaraldehyde, respectively. Also active, with a lower efficiency, toward feruloyl-CoA and sinapoyl-CoA. Involved in the production of floral volatile phenylpropanoids in flowers of fragrant cultivars from cinnamic acid, a common precursor with the anthocyanin biosynthesis pathway involved in flower pigmentation. The sequence is that of Cinnamoyl-CoA reductase 2 from Medicago truncatula (Barrel medic).